The sequence spans 207 residues: Large ribosomal subunit protein bL25 (207 aa).

Belongs to the bacterial ribosomal protein bL25 family. CTC subfamily. Part of the 50S ribosomal subunit; part of the 5S rRNA/L5/L18/L25 subcomplex. Contacts the 5S rRNA. Binds to the 5S rRNA independently of L5 and L18.

In terms of biological role, this is one of the proteins that binds to the 5S RNA in the ribosome where it forms part of the central protuberance. The chain is Large ribosomal subunit protein bL25 from Brucella canis (strain ATCC 23365 / NCTC 10854 / RM-666).